A 91-amino-acid chain; its full sequence is Non-specific lipid-transfer protein 1 (91 aa).

4 disulfides stabilise this stretch: Cys-3–Cys-50, Cys-13–Cys-27, Cys-28–Cys-73, and Cys-48–Cys-87.

Belongs to the plant LTP family.

Plant non-specific lipid-transfer proteins transfer phospholipids as well as galactolipids across membranes. May play a role in wax or cutin deposition in the cell walls of expanding epidermal cells and certain secretory tissues. The chain is Non-specific lipid-transfer protein 1 from Prunus domestica (Garden plum).